The chain runs to 157 residues: Ribonuclease H (157 aa).

One can recognise an RNase H type-1 domain in the interval 1–146 (MPELFAYTDG…ADALAREGMA (146 aa)). Mg(2+) is bound by residues Asp-9, Glu-52, Asp-74, and Asp-138.

This sequence belongs to the RNase H family. Monomer. Mg(2+) serves as cofactor.

Its subcellular location is the cytoplasm. It carries out the reaction Endonucleolytic cleavage to 5'-phosphomonoester.. Its function is as follows. Endonuclease that specifically degrades the RNA of RNA-DNA hybrids. The chain is Ribonuclease H from Dinoroseobacter shibae (strain DSM 16493 / NCIMB 14021 / DFL 12).